The primary structure comprises 198 residues: Ribonuclease HII (198 aa).

Positions Q10–S198 constitute an RNase H type-2 domain. A divalent metal cation contacts are provided by D16, E17, and D108.

Belongs to the RNase HII family. The cofactor is Mn(2+). It depends on Mg(2+) as a cofactor.

It is found in the cytoplasm. The enzyme catalyses Endonucleolytic cleavage to 5'-phosphomonoester.. In terms of biological role, endonuclease that specifically degrades the RNA of RNA-DNA hybrids. In Escherichia coli O6:H1 (strain CFT073 / ATCC 700928 / UPEC), this protein is Ribonuclease HII.